Reading from the N-terminus, the 122-residue chain is N(2)-fixation sustaining protein CowN (122 aa).

Belongs to the CowN family.

Is required to sustain N(2)-dependent growth in the presence of low levels of carbon monoxide (CO). Probably acts by protecting the N(2) fixation ability of the nitrogenase complex, which is inactivated in the presence of CO. The chain is N(2)-fixation sustaining protein CowN from Azorhizobium caulinodans (strain ATCC 43989 / DSM 5975 / JCM 20966 / LMG 6465 / NBRC 14845 / NCIMB 13405 / ORS 571).